The following is a 101-amino-acid chain: Protein Tat (101 aa).

The interval 1-24 (MEPIDPNLEPWNHPGSQPKTACNN) is interaction with human CREBBP. The interval 1–48 (MEPIDPNLEPWNHPGSQPKTACNNCYCKQCCYHCQLCFTKKGLGISYG) is transactivation. Cysteine 22, cysteine 25, and cysteine 27 together coordinate Zn(2+). Positions 22–37 (CNNCYCKQCCYHCQLC) are cysteine-rich. N6-acetyllysine; by host PCAF is present on lysine 28. The Zn(2+) site is built by cysteine 30, histidine 33, cysteine 34, and cysteine 37. Residues 38–48 (FTKKGLGISYG) are core. The disordered stretch occupies residues 48–101 (GRRKRKQRRRTSESSQNHQDPVPKQPLSQPGGIETGQKKSKKEVESQTTSDQFA). The Nuclear localization signal, RNA-binding (TAR), and protein transduction signature appears at 49 to 57 (RRKRKQRRR). Residues 49-86 (RRKRKQRRRTSESSQNHQDPVPKQPLSQPGGIETGQKK) are interaction with the host capping enzyme RNGTT. At lysine 51 the chain carries N6-acetyllysine; by host EP300 and GCN5L2. Arginine 52 carries the post-translational modification Asymmetric dimethylarginine; by host PRMT6. Lysine 71 is covalently cross-linked (Glycyl lysine isopeptide (Lys-Gly) (interchain with G-Cter in ubiquitin)).

Belongs to the lentiviruses Tat family. As to quaternary structure, interacts with host CCNT1. Associates with the P-TEFb complex composed at least of Tat, P-TEFb (CDK9 and CCNT1), TAR RNA, RNA Pol II. Recruits the HATs CREBBP, TAF1/TFIID, EP300, PCAF and GCN5L2. Interacts with host KAT5/Tip60; this interaction targets the latter to degradation. Interacts with the host deacetylase SIRT1. Interacts with host capping enzyme RNGTT; this interaction stimulates RNGTT. Binds to host KDR, and to the host integrins ITGAV/ITGB3 and ITGA5/ITGB1. Interacts with host KPNB1/importin beta-1 without previous binding to KPNA1/importin alpha-1. Interacts with EIF2AK2. Interacts with host nucleosome assembly protein NAP1L1; this interaction may be required for the transport of Tat within the nucleus, since the two proteins interact at the nuclear rim. Interacts with host C1QBP/SF2P32; this interaction involves lysine-acetylated Tat. Interacts with the host chemokine receptors CCR2, CCR3 and CXCR4. Interacts with host DPP4/CD26; this interaction may trigger an anti-proliferative effect. Interacts with host LDLR. Interacts with the host extracellular matrix metalloproteinase MMP1. Interacts with host PRMT6; this interaction mediates Tat's methylation. Interacts with, and is ubiquitinated by MDM2/Hdm2. Interacts with host PSMC3 and HTATIP2. Interacts with STAB1; this interaction may overcome SATB1-mediated repression of IL2 and IL2RA (interleukin) in T cells by binding to the same domain than HDAC1. Interacts (when acetylated) with human CDK13, thereby increasing HIV-1 mRNA splicing and promoting the production of the doubly spliced HIV-1 protein Nef. Interacts with host TBP; this interaction modulates the activity of transcriptional pre-initiation complex. Interacts with host RELA. In terms of processing, asymmetrical arginine methylation by host PRMT6 seems to diminish the transactivation capacity of Tat and affects the interaction with host CCNT1. Post-translationally, polyubiquitination by host MDM2 does not target Tat to degradation, but activates its transactivation function and fosters interaction with CCNT1 and TAR RNA. Phosphorylated by EIF2AK2 on serine and threonine residues adjacent to the basic region important for TAR RNA binding and function. Phosphorylation of Tat by EIF2AK2 is dependent on the prior activation of EIF2AK2 by dsRNA.

The protein resides in the host nucleus. Its subcellular location is the host nucleolus. It is found in the host cytoplasm. It localises to the secreted. Transcriptional activator that increases RNA Pol II processivity, thereby increasing the level of full-length viral transcripts. Recognizes a hairpin structure at the 5'-LTR of the nascent viral mRNAs referred to as the transactivation responsive RNA element (TAR) and recruits the cyclin T1-CDK9 complex (P-TEFb complex) that will in turn hyperphosphorylate the RNA polymerase II to allow efficient elongation. The CDK9 component of P-TEFb and other Tat-activated kinases hyperphosphorylate the C-terminus of RNA Pol II that becomes stabilized and much more processive. Other factors such as HTATSF1/Tat-SF1, SUPT5H/SPT5, and HTATIP2 are also important for Tat's function. Besides its effect on RNA Pol II processivity, Tat induces chromatin remodeling of proviral genes by recruiting the histone acetyltransferases (HATs) CREBBP, EP300 and PCAF to the chromatin. This also contributes to the increase in proviral transcription rate, especially when the provirus integrates in transcriptionally silent region of the host genome. To ensure maximal activation of the LTR, Tat mediates nuclear translocation of NF-kappa-B by interacting with host RELA. Through its interaction with host TBP, Tat may also modulate transcription initiation. Tat can reactivate a latently infected cell by penetrating in it and transactivating its LTR promoter. In the cytoplasm, Tat is thought to act as a translational activator of HIV-1 mRNAs. In terms of biological role, extracellular circulating Tat can be endocytosed by surrounding uninfected cells via the binding to several surface receptors such as CD26, CXCR4, heparan sulfate proteoglycans (HSPG) or LDLR. Neurons are rarely infected, but they internalize Tat via their LDLR. Through its interaction with nuclear HATs, Tat is potentially able to control the acetylation-dependent cellular gene expression. Modulates the expression of many cellular genes involved in cell survival, proliferation or in coding for cytokines or cytokine receptors. Tat plays a role in T-cell and neurons apoptosis. Tat induced neurotoxicity and apoptosis probably contribute to neuroAIDS. Circulating Tat also acts as a chemokine-like and/or growth factor-like molecule that binds to specific receptors on the surface of the cells, affecting many cellular pathways. In the vascular system, Tat binds to ITGAV/ITGB3 and ITGA5/ITGB1 integrins dimers at the surface of endothelial cells and competes with bFGF for heparin-binding sites, leading to an excess of soluble bFGF. The chain is Protein Tat from Pan troglodytes (Chimpanzee).